The sequence spans 213 residues: Thiamine-phosphate synthase (213 aa).

Residues 38–42 and asparagine 73 contribute to the 4-amino-2-methyl-5-(diphosphooxymethyl)pyrimidine site; that span reads QLREK. Residues aspartate 74 and aspartate 93 each coordinate Mg(2+). A 4-amino-2-methyl-5-(diphosphooxymethyl)pyrimidine-binding site is contributed by serine 111. 137 to 139 is a binding site for 2-[(2R,5Z)-2-carboxy-4-methylthiazol-5(2H)-ylidene]ethyl phosphate; sequence TTS. A 4-amino-2-methyl-5-(diphosphooxymethyl)pyrimidine-binding site is contributed by lysine 140. 2-[(2R,5Z)-2-carboxy-4-methylthiazol-5(2H)-ylidene]ethyl phosphate contacts are provided by residues glycine 169 and 189–190; that span reads IS.

The protein belongs to the thiamine-phosphate synthase family. Mg(2+) is required as a cofactor.

It catalyses the reaction 2-[(2R,5Z)-2-carboxy-4-methylthiazol-5(2H)-ylidene]ethyl phosphate + 4-amino-2-methyl-5-(diphosphooxymethyl)pyrimidine + 2 H(+) = thiamine phosphate + CO2 + diphosphate. It carries out the reaction 2-(2-carboxy-4-methylthiazol-5-yl)ethyl phosphate + 4-amino-2-methyl-5-(diphosphooxymethyl)pyrimidine + 2 H(+) = thiamine phosphate + CO2 + diphosphate. The catalysed reaction is 4-methyl-5-(2-phosphooxyethyl)-thiazole + 4-amino-2-methyl-5-(diphosphooxymethyl)pyrimidine + H(+) = thiamine phosphate + diphosphate. The protein operates within cofactor biosynthesis; thiamine diphosphate biosynthesis; thiamine phosphate from 4-amino-2-methyl-5-diphosphomethylpyrimidine and 4-methyl-5-(2-phosphoethyl)-thiazole: step 1/1. Its function is as follows. Condenses 4-methyl-5-(beta-hydroxyethyl)thiazole monophosphate (THZ-P) and 2-methyl-4-amino-5-hydroxymethyl pyrimidine pyrophosphate (HMP-PP) to form thiamine monophosphate (TMP). This chain is Thiamine-phosphate synthase, found in Lysinibacillus sphaericus (strain C3-41).